The following is a 450-amino-acid chain: tRNA-2-methylthio-N(6)-dimethylallyladenosine synthase (450 aa).

The 118-residue stretch at 2–119 (KKVFVKTYGC…LPDLIARRQR (118 aa)) folds into the MTTase N-terminal domain. C11, C48, C82, C156, C160, and C163 together coordinate [4Fe-4S] cluster. Residues 142 to 375 (RVEGPSAFVS…QATIEENVQR (234 aa)) enclose the Radical SAM core domain. The TRAM domain maps to 378-448 (QNMVGTVQRI…PHSLRGEIVV (71 aa)).

The protein belongs to the methylthiotransferase family. MiaB subfamily. As to quaternary structure, monomer. It depends on [4Fe-4S] cluster as a cofactor.

It localises to the cytoplasm. The enzyme catalyses N(6)-dimethylallyladenosine(37) in tRNA + (sulfur carrier)-SH + AH2 + 2 S-adenosyl-L-methionine = 2-methylsulfanyl-N(6)-dimethylallyladenosine(37) in tRNA + (sulfur carrier)-H + 5'-deoxyadenosine + L-methionine + A + S-adenosyl-L-homocysteine + 2 H(+). Catalyzes the methylthiolation of N6-(dimethylallyl)adenosine (i(6)A), leading to the formation of 2-methylthio-N6-(dimethylallyl)adenosine (ms(2)i(6)A) at position 37 in tRNAs that read codons beginning with uridine. The chain is tRNA-2-methylthio-N(6)-dimethylallyladenosine synthase from Cupriavidus necator (strain ATCC 17699 / DSM 428 / KCTC 22496 / NCIMB 10442 / H16 / Stanier 337) (Ralstonia eutropha).